The following is a 118-amino-acid chain: Putative pterin-4-alpha-carbinolamine dehydratase (118 aa).

This sequence belongs to the pterin-4-alpha-carbinolamine dehydratase family.

The catalysed reaction is (4aS,6R)-4a-hydroxy-L-erythro-5,6,7,8-tetrahydrobiopterin = (6R)-L-erythro-6,7-dihydrobiopterin + H2O. The polypeptide is Putative pterin-4-alpha-carbinolamine dehydratase (Pseudomonas savastanoi pv. phaseolicola (strain 1448A / Race 6) (Pseudomonas syringae pv. phaseolicola (strain 1448A / Race 6))).